Reading from the N-terminus, the 249-residue chain is Enolase-phosphatase E1 (249 aa).

Belongs to the HAD-like hydrolase superfamily. MasA/MtnC family. As to quaternary structure, monomer. Requires Mg(2+) as cofactor.

It carries out the reaction 5-methylsulfanyl-2,3-dioxopentyl phosphate + H2O = 1,2-dihydroxy-5-(methylsulfanyl)pent-1-en-3-one + phosphate. The protein operates within amino-acid biosynthesis; L-methionine biosynthesis via salvage pathway; L-methionine from S-methyl-5-thio-alpha-D-ribose 1-phosphate: step 3/6. It functions in the pathway amino-acid biosynthesis; L-methionine biosynthesis via salvage pathway; L-methionine from S-methyl-5-thio-alpha-D-ribose 1-phosphate: step 4/6. Its function is as follows. Bifunctional enzyme that catalyzes the enolization of 2,3-diketo-5-methylthiopentyl-1-phosphate (DK-MTP-1-P) into the intermediate 2-hydroxy-3-keto-5-methylthiopentenyl-1-phosphate (HK-MTPenyl-1-P), which is then dephosphorylated to form the acireductone 1,2-dihydroxy-3-keto-5-methylthiopentene (DHK-MTPene). The protein is Enolase-phosphatase E1 of Synechococcus sp. (strain CC9605).